Here is a 125-residue protein sequence, read N- to C-terminus: MPTINQLVRKGRKTAEYKSNSPALKQCPQKRGVCTVVKTSTPKKPNSALRKVARVRLTNGYEVTAYIPGIGHNLQEHSVVLIRGGRVKDLPGVRYHIVRGALDAAGVANRMQARSKYGAKKPKQK.

A 3-methylthioaspartic acid modification is found at Asp-89.

Belongs to the universal ribosomal protein uS12 family. As to quaternary structure, part of the 30S ribosomal subunit. Contacts proteins S8 and S17. May interact with IF1 in the 30S initiation complex.

In terms of biological role, with S4 and S5 plays an important role in translational accuracy. Interacts with and stabilizes bases of the 16S rRNA that are involved in tRNA selection in the A site and with the mRNA backbone. Located at the interface of the 30S and 50S subunits, it traverses the body of the 30S subunit contacting proteins on the other side and probably holding the rRNA structure together. The combined cluster of proteins S8, S12 and S17 appears to hold together the shoulder and platform of the 30S subunit. The sequence is that of Small ribosomal subunit protein uS12 from Clostridium novyi (strain NT).